The following is a 184-amino-acid chain: Der GTPase-activating protein YihI (184 aa).

The tract at residues 1–107 (MNRPVKGAAD…VVAAKPTMSP (107 aa)) is disordered. The span at 21-32 (TREELEREARER) shows a compositional bias: basic and acidic residues. Positions 80–95 (SAVAKPKPKSKPSAPV) are enriched in low complexity.

Belongs to the YihI family. Interacts with Der.

Functionally, a GTPase-activating protein (GAP) that modifies Der/EngA GTPase function. May play a role in ribosome biogenesis. The sequence is that of Der GTPase-activating protein YihI from Pectobacterium carotovorum subsp. carotovorum (strain PC1).